Reading from the N-terminus, the 552-residue chain is Acyl-CoA synthetase FUM10 (552 aa).

Residue E183–K194 coordinates AMP. An AMP-binding region spans residues E463–K536.

Belongs to the ATP-dependent AMP-binding enzyme family.

It functions in the pathway mycotoxin biosynthesis. Acyl-CoA synthetase; part of the gene cluster that mediates the biosynthesis of fumonisins B1 (FB1), B2 (FB2), B3 (FB3), and B4 (FB4), which are carcinogenic mycotoxins. Within the pathway, FUM10 is involved the addition of the tricarballylic moieties to the carbon backbone. FUM10 catalyzes the CoA activation of citrate to form tricarballylic acid. The biosynthesis starts with the FUM1-catalyzed carbon chain assembly from one molecule of acetyl-CoA, eight molecules of malonyl-CoA, and two molecules of methionine (in S-adenosyl form). The C18 polyketide chain is released from the enzyme by a nucleophilic attack of a carbanion, which is derived from R-carbon of alanine by decarboxylation, on the carbonyl carbon of polyketide acyl chain. This step is catalyzed by the pyridoxal 5'-phosphate-dependent aminoacyl transferase FUM8. The resultant 3-keto intermediate is then stereospecifically reduced to a 3-hydroxyl product by reductase FUM13. Subsequent oxidations at C-10 by the cytochrome P450 monooxygenase FUM2, C-14 and C-15 by FUM6, FUM12 or FUM15, tricarballylic esterification of the hydroxyl groups on C-14 and C-15 by acyltransferase FUM14, and C-5 hydroxylation by 2-keto-glutarate-dependent dioxygenase FUM3 furnish the biosynthesis of fumonisins. The tricarballylic moieties are most likely derived from the citric acid cycle, and their addition to the carbon backbone may involve FUM7, FUM10, FUM11 and FUM14. The sequence is that of Acyl-CoA synthetase FUM10 from Gibberella moniliformis (strain M3125 / FGSC 7600) (Maize ear and stalk rot fungus).